A 142-amino-acid chain; its full sequence is Baculoviral IAP repeat-containing protein 5 (142 aa).

One copy of the BIR repeat lies at 18–88 (RVSTFKNWPF…KHSSGCAFLS (71 aa)). At S20 the chain carries Phosphoserine; by AURKC. Position 23 is an N6-acetyllysine (K23). T34 bears the Phosphothreonine; by CDK1 and CDK15 mark. T48 is subject to Phosphothreonine; by CK2; in vitro. C57, C60, H77, and C84 together coordinate Zn(2+). An N6-acetyllysine mark is found at K90, K110, K112, and K115. Position 117 is a phosphothreonine; by AURKB (T117).

The protein belongs to the IAP family. In terms of assembly, monomer or homodimer. Exists as a homodimer in the apo state and as a monomer in the CPC-bound state. The monomer protects cells against apoptosis more efficiently than the dimer. Only the dimeric form is capable of enhancing tubulin stability in cells. When phosphorylated, interacts with LAMTOR5/HBXIP; the resulting complex binds pro-CASP9, as well as active CASP9, but much less efficiently. Component of the chromosomal passenger complex (CPC) composed of at least BIRC5/survivin, CDCA8/borealin, INCENP, AURKB or AURKC; in the complex forms a triple-helix bundle-based subcomplex with INCENP and CDCA8. Interacts with JTB. Interacts (via BIR domain) with histone H3 phosphorylated at 'Thr-3' (H3pT3). Interacts with EVI5. Interacts with GTP-bound RAN in both the S and M phases of the cell cycle. Interacts with USP9X. Interacts with tubulin. Interacts with BIRC2/c-IAP1. The monomeric form interacts with XIAP/BIRC4. Both the dimeric and monomeric form can interact with DIABLO/SMAC. Interacts with BIRC6/bruce. Interacts with FBXL7; this interaction facilitates the polyubiquitination and subsequent proteasomal degradation of BIRC5 by the SCF(FBXL7) E3 ubiquitin-protein ligase complex. In terms of processing, ubiquitinated by the Cul9-RING ubiquitin-protein ligase complex, leading to its degradation. Ubiquitination is required for centrosomal targeting. Deubiquitinated by USP35 or USP38; leading to stabilization. Post-translationally, in vitro phosphorylation at Thr-117 by AURKB prevents interaction with INCENP and localization to mitotic chromosomes. Phosphorylation at Thr-48 by CK2 is critical for its mitotic and anti-apoptotic activities. Phosphorylation at Thr-34 by CDK15 is critical for its anti-apoptotic activity. Phosphorylation at Ser-20 by AURKC is critical for regulation of proper chromosome alignment and segregation, and possibly cytokinesis. Expressed in spleen, lung, brain, heart, kidney and intestine (at protein level). Expressed in cochlea including the organ of Corti, the lateral wall, the interdental cells of the Limbus as well as in cells of the cochlear nerve and the spiral ganglions (at protein level). Also expressed in Schwann cells (at protein level). Not expressed in cells of the inner and outer sulcus or the Reissner's membrane (at protein level).

It localises to the cytoplasm. The protein localises to the nucleus. The protein resides in the chromosome. Its subcellular location is the centromere. It is found in the cytoskeleton. It localises to the spindle. The protein localises to the kinetochore. The protein resides in the midbody. Multitasking protein that has dual roles in promoting cell proliferation and preventing apoptosis. Component of a chromosome passage protein complex (CPC) which is essential for chromosome alignment and segregation during mitosis and cytokinesis. Acts as an important regulator of the localization of this complex; directs CPC movement to different locations from the inner centromere during prometaphase to midbody during cytokinesis and participates in the organization of the center spindle by associating with polymerized microtubules. Involved in the recruitment of CPC to centromeres during early mitosis via association with histone H3 phosphorylated at 'Thr-3' (H3pT3) during mitosis. The complex with RAN plays a role in mitotic spindle formation by serving as a physical scaffold to help deliver the RAN effector molecule TPX2 to microtubules. May counteract a default induction of apoptosis in G2/M phase. The acetylated form represses STAT3 transactivation of target gene promoters. May play a role in neoplasia. Inhibitor of CASP3 and CASP7. Essential for the maintenance of mitochondrial integrity and function. The chain is Baculoviral IAP repeat-containing protein 5 from Cavia porcellus (Guinea pig).